The primary structure comprises 360 residues: Photosystem II protein D1 (360 aa).

The next 3 helical transmembrane spans lie at 32-49, 121-136, and 145-159; these read YLGWFGCLMVPTLVSATF, HFFIGVCSYLGREWEL, and WIFVAFSAPVAAASA. His121 provides a ligand contact to chlorophyll a. Residue Tyr129 coordinates pheophytin a. 2 residues coordinate [CaMn4O5] cluster: Asp173 and Glu192. Residues 200-221 form a helical membrane-spanning segment; sequence LHMFGVAAVFGGSLFSAMHGSL. His201 serves as a coordination point for chlorophyll a. A quinone contacts are provided by residues His218 and 267-268; that span reads SF. His218 is a Fe cation binding site. His275 serves as a coordination point for Fe cation. The chain crosses the membrane as a helical span at residues 277–291; the sequence is FLGAWPVVGIWLTAM. Positions 335, 336, 345, and 347 each coordinate [CaMn4O5] cluster. Positions 348 to 360 are excised as a propeptide; that stretch reads CANCLLSLWPMVG.

Belongs to the reaction center PufL/M/PsbA/D family. As to quaternary structure, PSII is composed of 1 copy each of membrane proteins PsbA, PsbB, PsbC, PsbD, PsbE, PsbF, PsbH, PsbI, PsbJ, PsbK, PsbL, PsbM, PsbT, PsbX, PsbY, PsbZ, Psb30/Ycf12, at least 3 peripheral proteins of the oxygen-evolving complex and a large number of cofactors. It forms dimeric complexes. The D1/D2 heterodimer binds P680, chlorophylls that are the primary electron donor of PSII, and subsequent electron acceptors. It shares a non-heme iron and each subunit binds pheophytin, quinone, additional chlorophylls, carotenoids and lipids. D1 provides most of the ligands for the Mn4-Ca-O5 cluster of the oxygen-evolving complex (OEC). There is also a Cl(-1) ion associated with D1 and D2, which is required for oxygen evolution. The PSII complex binds additional chlorophylls, carotenoids and specific lipids. serves as cofactor. In terms of processing, tyr-164 forms a radical intermediate that is referred to as redox-active TyrZ, YZ or Y-Z. Post-translationally, C-terminally processed by CtpA; processing is essential to allow assembly of the oxygen-evolving complex and thus photosynthetic growth.

Its subcellular location is the plastid. It is found in the chloroplast thylakoid membrane. It carries out the reaction 2 a plastoquinone + 4 hnu + 2 H2O = 2 a plastoquinol + O2. Functionally, photosystem II (PSII) is a light-driven water:plastoquinone oxidoreductase that uses light energy to abstract electrons from H(2)O, generating O(2) and a proton gradient subsequently used for ATP formation. It consists of a core antenna complex that captures photons, and an electron transfer chain that converts photonic excitation into a charge separation. The D1/D2 (PsbA/PsbD) reaction center heterodimer binds P680, the primary electron donor of PSII as well as several subsequent electron acceptors. In Karenia mikimotoi (Red tide dinoflagellate), this protein is Photosystem II protein D1.